The chain runs to 214 residues: Large ribosomal subunit protein uL16 (214 aa).

It belongs to the universal ribosomal protein uL16 family. In terms of assembly, component of the large ribosomal subunit. Mature ribosomes consist of a small (40S) and a large (60S) subunit. The 40S subunit contains about 33 different proteins and 1 molecule of RNA (18S). The 60S subunit contains about 49 different proteins and 3 molecules of RNA (28S, 5.8S and 5S).

This is Large ribosomal subunit protein uL16 (rpl-10L) from Caenorhabditis elegans.